A 2025-amino-acid polypeptide reads, in one-letter code: E3 ubiquitin-protein ligase TRIP12 (2025 aa).

The span at 1–10 shows a compositional bias: polar residues; the sequence is MSNRPNNNPG. The disordered stretch occupies residues 1 to 404; sequence MSNRPNNNPG…SGESESDDSE (404 aa). The residue at position 2 (Ser-2) is an N-acetylserine. Ser-12 is subject to Phosphoserine. Positions 18–27 are enriched in polar residues; it reads RNTAGAQPQD. A compositionally biased stretch (basic and acidic residues) spans 48–70; that stretch reads DPDRANTSERQKTGQVPKKDNSR. 3 positions are modified to phosphoserine: Ser-77, Ser-85, and Ser-100. Positions 78-88 are enriched in polar residues; that stretch reads PDYNRTNSPSS. The segment covering 119 to 132 has biased composition (polar residues); sequence EQQLKSAQLPSTSK. Low complexity-rich tracts occupy residues 154–166 and 177–215; these read SSCV…SEST and KLAS…ASST. Position 181 is an N6-acetyllysine (Lys-181). Polar residues predominate over residues 280-290; that stretch reads PGSSKSETSKP. Residues Ser-310 and Ser-312 each carry the phosphoserine modification. Residues 326–338 show a composition bias toward polar residues; the sequence is QKTTGSCASTSRR. Over residues 346–358 the composition is skewed to basic and acidic residues; sequence GAAEARRQEKMAD. Polar residues predominate over residues 360–371; the sequence is ESNQETVNSSAA. The span at 379-397 shows a compositional bias: low complexity; it reads GAAASSSVAGAVGMTTSGE. The 115-residue stretch at 755–869 folds into the WWE domain; sequence MLKKGNAQNT…DPELAKSFIK (115 aa). The disordered stretch occupies residues 970 to 1077; that stretch reads ESLLTSPPKA…QSPKSSFLAS (108 aa). The residue at position 975 (Ser-975) is a Phosphoserine. Positions 983-1006 are enriched in low complexity; sequence GSGSLGSTTPASSGTATAATNASA. A phosphoserine mark is found at Ser-1024 and Ser-1030. Basic residues predominate over residues 1034–1047; it reads KRKRLPKRGPRRPK. A Phosphoserine modification is found at Ser-1049. Positions 1050–1059 are enriched in basic and acidic residues; it reads PPRDDDKVDN. Residues 1062 to 1073 show a composition bias toward low complexity; it reads KSPTTTQSPKSS. 5 positions are modified to phosphoserine: Ser-1063, Ser-1350, Ser-1355, Ser-1362, and Ser-1409. Residue Thr-1410 is modified to Phosphothreonine. 2 disordered regions span residues 1441-1466 and 1601-1620; these read TKDC…NAKK and TNPE…PRLD. Lys-1458 is subject to N6-acetyllysine. Ser-1460 is subject to Phosphoserine. The interval 1529–1603 is K-box; sequence EIIPTSEFIN…AMQRLLDTNP (75 aa). Residues 1918–2025 enclose the HECT domain; the sequence is PDHGYTHDSR…REGQQSFHLS (108 aa). The active-site Glycyl thioester intermediate is the Cys-1992.

This sequence belongs to the UPL family. K-HECT subfamily. As to quaternary structure, interacts with MYC; leading to disrupt interaction with isoform p19ARF/ARF of CDKN2A. Interacts with TRADD; leading to disrupt interaction with isoform p19ARF/ARF of CDKN2A. Interacts with SMARCC1; leading to disrupt interaction with SMARCE1.

It is found in the nucleus. The protein resides in the nucleoplasm. The enzyme catalyses S-ubiquitinyl-[E2 ubiquitin-conjugating enzyme]-L-cysteine + [acceptor protein]-L-lysine = [E2 ubiquitin-conjugating enzyme]-L-cysteine + N(6)-ubiquitinyl-[acceptor protein]-L-lysine.. It functions in the pathway protein modification; protein ubiquitination. Its function is as follows. E3 ubiquitin-protein ligase involved in ubiquitin fusion degradation (UFD) pathway and regulation of DNA repair. Part of the ubiquitin fusion degradation (UFD) pathway, a process that mediates ubiquitination of protein at their N-terminus, regardless of the presence of lysine residues in target proteins. Acts as a key regulator of DNA damage response by acting as a suppressor of RNF168, an E3 ubiquitin-protein ligase that promotes accumulation of 'Lys-63'-linked histone H2A and H2AX at DNA damage sites, thereby acting as a guard against excessive spreading of ubiquitinated chromatin at damaged chromosomes. In normal cells, mediates ubiquitination and degradation of isoform p19ARF/ARF of CDKN2A, a lysine-less tumor suppressor required for p53/TP53 activation under oncogenic stress. In cancer cells, however, isoform p19ARF/ARF and TRIP12 are located in different cell compartments, preventing isoform p19ARF/ARF ubiquitination and degradation. Does not mediate ubiquitination of isoform p16-INK4a of CDKN2A. Also catalyzes ubiquitination of NAE1 and SMARCE1, leading to their degradation. Ubiquitination and degradation of target proteins is regulated by interaction with proteins such as MYC, TRADD or SMARCC1, which disrupt the interaction between TRIP12 and target proteins. Mediates ubiquitination of ASXL1: following binding to N(6)-methyladenosine methylated DNA, ASXL1 is ubiquitinated by TRIP12, leading to its degradation and subsequent inactivation of the PR-DUB complex. The protein is E3 ubiquitin-protein ligase TRIP12 (Trip12) of Mus musculus (Mouse).